We begin with the raw amino-acid sequence, 330 residues long: DNA-directed RNA polymerase subunit alpha (330 aa).

Positions 1–236 (MQNSVIEFLK…EQLEAFIDLR (236 aa)) are alpha N-terminal domain (alpha-NTD). Positions 250-330 (FDPILLRLVD…NWPPTNILDN (81 aa)) are alpha C-terminal domain (alpha-CTD).

It belongs to the RNA polymerase alpha chain family. As to quaternary structure, homodimer. The RNAP catalytic core consists of 2 alpha, 1 beta, 1 beta' and 1 omega subunit. When a sigma factor is associated with the core the holoenzyme is formed, which can initiate transcription.

It carries out the reaction RNA(n) + a ribonucleoside 5'-triphosphate = RNA(n+1) + diphosphate. DNA-dependent RNA polymerase catalyzes the transcription of DNA into RNA using the four ribonucleoside triphosphates as substrates. This chain is DNA-directed RNA polymerase subunit alpha, found in Blochmanniella pennsylvanica (strain BPEN).